The following is a 446-amino-acid chain: GTPase Der (446 aa).

EngA-type G domains are found at residues 3–167 and 180–353; these read PVLA…AFDE and IRLA…ASAT. Residues 9–16, 56–60, 119–122, 186–193, 233–237, and 298–301 contribute to the GTP site; these read GRPNVGKS, DTGGF, NKAE, DTAGL, and NKWD. In terms of domain architecture, KH-like spans 354-438; it reads KKLATPVLTR…PMRIEMKSSR (85 aa).

Belongs to the TRAFAC class TrmE-Era-EngA-EngB-Septin-like GTPase superfamily. EngA (Der) GTPase family. In terms of assembly, associates with the 50S ribosomal subunit.

GTPase that plays an essential role in the late steps of ribosome biogenesis. This Methylibium petroleiphilum (strain ATCC BAA-1232 / LMG 22953 / PM1) protein is GTPase Der.